Here is a 503-residue protein sequence, read N- to C-terminus: Transcription termination/antitermination protein NusA (503 aa).

The S1 motif domain occupies 139–203 (GDIINGIVKR…KGPQIFLSRV (65 aa)). Residues 308–378 (SHKVEVVVSQ…LDVEEVIGQL (71 aa)) form the KH domain.

It belongs to the NusA family. In terms of assembly, monomer. Binds directly to the core enzyme of the DNA-dependent RNA polymerase and to nascent RNA.

It localises to the cytoplasm. In terms of biological role, participates in both transcription termination and antitermination. This Rickettsia prowazekii (strain Madrid E) protein is Transcription termination/antitermination protein NusA.